A 187-amino-acid polypeptide reads, in one-letter code: Peptidyl-tRNA hydrolase (187 aa).

Tyrosine 14 provides a ligand contact to tRNA. Histidine 19 (proton acceptor) is an active-site residue. 3 residues coordinate tRNA: tyrosine 60, asparagine 62, and asparagine 108.

This sequence belongs to the PTH family. As to quaternary structure, monomer.

It is found in the cytoplasm. The catalysed reaction is an N-acyl-L-alpha-aminoacyl-tRNA + H2O = an N-acyl-L-amino acid + a tRNA + H(+). In terms of biological role, hydrolyzes ribosome-free peptidyl-tRNAs (with 1 or more amino acids incorporated), which drop off the ribosome during protein synthesis, or as a result of ribosome stalling. Catalyzes the release of premature peptidyl moieties from peptidyl-tRNA molecules trapped in stalled 50S ribosomal subunits, and thus maintains levels of free tRNAs and 50S ribosomes. The sequence is that of Peptidyl-tRNA hydrolase from Mycoplasmopsis synoviae (strain 53) (Mycoplasma synoviae).